We begin with the raw amino-acid sequence, 245 residues long: tRNA pseudouridine synthase A (245 aa).

Asp-52 acts as the Nucleophile in catalysis. Tyr-111 contributes to the substrate binding site.

The protein belongs to the tRNA pseudouridine synthase TruA family. As to quaternary structure, homodimer.

It catalyses the reaction uridine(38/39/40) in tRNA = pseudouridine(38/39/40) in tRNA. In terms of biological role, formation of pseudouridine at positions 38, 39 and 40 in the anticodon stem and loop of transfer RNAs. In Thermotoga neapolitana (strain ATCC 49049 / DSM 4359 / NBRC 107923 / NS-E), this protein is tRNA pseudouridine synthase A.